The primary structure comprises 140 residues: Large ribosomal subunit protein bL17 (140 aa).

The protein belongs to the bacterial ribosomal protein bL17 family. As to quaternary structure, part of the 50S ribosomal subunit. Contacts protein L32.

In Rhizorhabdus wittichii (strain DSM 6014 / CCUG 31198 / JCM 15750 / NBRC 105917 / EY 4224 / RW1) (Sphingomonas wittichii), this protein is Large ribosomal subunit protein bL17.